The sequence spans 961 residues: Cytochrome b5-like reductase apf12 (961 aa).

Residue Ala298 participates in FAD binding. Residues 429–548 form the FAD-binding FR-type domain; sequence ARPQVDAFAW…IKPAPHFRIA (120 aa). Residues 453-456, 499-500, and Gly753 each bind NADP(+); these read SRIQ and SK. Residues 716 to 793 enclose the Cytochrome b5 heme-binding domain; that stretch reads LNQITKLELA…LNEMVIGRLD (78 aa). Residue 753-755 coordinates FAD; that stretch reads GGE.

This sequence belongs to the flavoprotein pyridine nucleotide cytochrome reductase family. It depends on FAD as a cofactor.

It participates in secondary metabolite biosynthesis. Cytochrome b5-like reductase; part of the gene cluster that mediates the biosynthesis of the cyclic tetrapeptide apicidin F (APF). The non-ribosomal peptide synthetase apf1 incorporates four different amino acids to produce apicidin F: L-phenylalanine, D-pipecolic acid (D-pip), N-methoxy-L-tryptophan and L-2-aminooctanedioic acid. L-Phenylalanine is the only proteinogenic amino acid directly used by apf1. The 3 other apf1 substrates are non-proteinogenic and have to be modified by other enzymes of the cluster. Lysine is converted to delta-1-pyrroline-5-carboxylate (P5C) which is reduced to L-pipecolic acid (L-pip) by apf3. L-pip is epimerized to D-pip, probably by apf1 activity, prior to incorporation. L-Tryptophan is N-oxidyzed by one of the cytochrome P450 monooxygenases (apf7 or apf8), and further methylated at the hydroxy group by the O-methyltransferase apf6 to yield N-methoxy-L-tryptophan. The synthesis of the fourth apf1 substrate is more complex. The fatty acid synthase apf5 is involved in the synthesis of the octanoic acid backbone of L-2-aminooctanedioic acid by fixing one acetyl-CoA unit and three malonyl-CoA units. Then one of the cytochrome P450 monooxygenases (apf7 or apf8) may oxidize this backbone to 2-oxooctanoic acid. The aminotransferase apf4 is predicted to catalyze the exchange of the keto group with an amino group. The next step would be the oxidation of 2-aminooctanoic acid by one of the cytochrome P450 monooxygenases (apf7 or apf8). The last step is the oxidation of 2-amino-8-hydroxyoctanoic acid to 2-aminooctanedioic acid is catalyzed by the FAD-dependent monooxygenase apf9. This Gibberella fujikuroi (strain CBS 195.34 / IMI 58289 / NRRL A-6831) (Bakanae and foot rot disease fungus) protein is Cytochrome b5-like reductase apf12.